The primary structure comprises 243 residues: Glucosamine-6-phosphate deaminase (243 aa).

Asp67 serves as the catalytic Proton acceptor; for enolization step. Asn137 serves as the catalytic For ring-opening step. The Proton acceptor; for ring-opening step role is filled by His139. Residue Glu144 is the For ring-opening step of the active site.

The protein belongs to the glucosamine/galactosamine-6-phosphate isomerase family. NagB subfamily.

It carries out the reaction alpha-D-glucosamine 6-phosphate + H2O = beta-D-fructose 6-phosphate + NH4(+). The protein operates within amino-sugar metabolism; N-acetylneuraminate degradation; D-fructose 6-phosphate from N-acetylneuraminate: step 5/5. Functionally, catalyzes the reversible isomerization-deamination of glucosamine 6-phosphate (GlcN6P) to form fructose 6-phosphate (Fru6P) and ammonium ion. This Staphylococcus epidermidis (strain ATCC 35984 / DSM 28319 / BCRC 17069 / CCUG 31568 / BM 3577 / RP62A) protein is Glucosamine-6-phosphate deaminase.